A 159-amino-acid chain; its full sequence is Cyclic pyranopterin monophosphate synthase (159 aa).

Substrate is bound by residues 75–77 and 113–114; these read LCH and ME. Aspartate 128 is a catalytic residue.

This sequence belongs to the MoaC family. In terms of assembly, homohexamer; trimer of dimers.

The enzyme catalyses (8S)-3',8-cyclo-7,8-dihydroguanosine 5'-triphosphate = cyclic pyranopterin phosphate + diphosphate. The protein operates within cofactor biosynthesis; molybdopterin biosynthesis. Its function is as follows. Catalyzes the conversion of (8S)-3',8-cyclo-7,8-dihydroguanosine 5'-triphosphate to cyclic pyranopterin monophosphate (cPMP). This Yersinia pseudotuberculosis serotype IB (strain PB1/+) protein is Cyclic pyranopterin monophosphate synthase.